Consider the following 283-residue polypeptide: tRNA pseudouridine synthase B (283 aa).

D38 acts as the Nucleophile in catalysis.

The protein belongs to the pseudouridine synthase TruB family. Type 1 subfamily.

It carries out the reaction uridine(55) in tRNA = pseudouridine(55) in tRNA. Responsible for synthesis of pseudouridine from uracil-55 in the psi GC loop of transfer RNAs. The protein is tRNA pseudouridine synthase B of Aster yellows witches'-broom phytoplasma (strain AYWB).